The following is a 1072-amino-acid chain: MAAYVSDELKAAALVEDDIEPEEQVADGEPSAKYMCPEKELSKACPSYQNSPAAEFSSHEMDSESHISETSDRMADFESSSIKNEEETKEVQVPLEDTTVSDSLEQMKAVYNNFLSNSYWSNLNLNLHQPSSENNGGGSSSSSSSSSSSCGSGSFDWHQSAMAKTLQQVSQNRMLPEPSLFSTVQLYRQSSKLYGSIFTGASKFRCKDCSAAYDTLVELTVHMNETGHYRDDNHETDNNNPKRWSKPRKRSLLEMEGKEDAQKVLKCMYCGHSFESLQDLSVHMIKTKHYQKVPLKEPVTPVAAKIIPAARKKPSLELELPSSPDSTGGTPKATLSDASDALQKNSNPYITPNNRYGHQNGASYAWHFEARKSQILKCMECGSSHDTLQELTAHMMVTGHFIKVTNSAMKKGKPIMETPVTPTITTLLDEKVQSVPLAATTFTSPSNTPASVSPKLTVEIKKEVDKEKAVLDEKPKEKEKASEEEEKYDISSKYHYLTENDLEESPKGGLDILKSLENTVTSAINKAQNGTPSWGGYPSIHAAYQLPNMMKLSLGSSGKSTPLKPMFGNSEIVSPTKTQTLVSPPSSQTSPMPKTNFHAMEELVKKVTEKVAKVEEKMKEPDSKLSPPKRATPSPCSSEQSEPIKMEASSGSGFKSQENSPSPPRDVCKEASPSAEPVENGKELVKPLSGGSLSGSTAIITDHPPEQPFVNPLSALQSVMNIHLGKAAKPSLPALDPMSMLFKMSNSLAEKAAVATPPPLQAKKAEHLDRYFYHVNNDQPIDLTKGKSDKGCSLGSGLLSPTSTSPATSSSTVTTAKTSAVVSFMSNSPLRENALSDISDMLKNLTESHTSKSSTPSSISEKSDIDGATLEEAEESTPAQKRKGRQSNWNPQHLLILQAQFAASLRQTSEGKYIMSDLSPQERMHISRFTGLSMTTISHWLANVKYQLRRTGGTKFLKNLDTGHPVFFCNDCASQIRTPSTYISHLESHLGFRLRDLSKLSTEQINNQIAQTKSPSEKMVTSSPEEDLGTTYQCKLCNRTFASKHAVKLHLSKTHGKSPEDHLLFVSELEKQ.

Disordered stretches follow at residues 44 to 71 (ACPS…SETS), 130 to 153 (PSSE…CGSG), and 228 to 247 (HYRD…WSKP). The span at 57–71 (SSHEMDSESHISETS) shows a compositional bias: basic and acidic residues. 2 consecutive C2H2-type zinc fingers follow at residues 204–228 (FRCK…ETGH) and 265–289 (LKCM…KTKH). Basic and acidic residues predominate over residues 228–237 (HYRDDNHETD). The interval 315 to 336 (SLELELPSSPDSTGGTPKATLS) is disordered. The C2H2-type 3; atypical zinc finger occupies 376–400 (LKCMECGSSHDTLQELTAHMMVTGH). A compositionally biased stretch (basic and acidic residues) spans 469 to 481 (AVLDEKPKEKEKA). 5 disordered regions span residues 469–489 (AVLD…EKYD), 569–594 (NSEI…PMPK), 616–690 (EKMK…PLSG), 784–815 (TKGK…TVTT), and 846–888 (TESH…RQSN). Polar residues-rich tracts occupy residues 571–593 (EIVS…SPMP) and 649–660 (SSGSGFKSQENS). Phosphoserine is present on Ser672. Low complexity-rich tracts occupy residues 791 to 815 (GCSL…TVTT) and 847 to 860 (ESHT…SSIS). A DNA-binding region (homeobox; atypical) is located at residues 882–952 (RKGRQSNWNP…NVKYQLRRTG (71 aa)). C2H2-type zinc fingers lie at residues 967–989 (FFCN…LESH) and 1032–1055 (YQCK…SKTH).

Belongs to the teashirt C2H2-type zinc-finger protein family. In terms of assembly, interacts (via N-terminus) with HDAC1 and HDAC2; the interaction is direct. Found in a trimeric complex with APBB1 and HDAC1; the interaction between HDAC1 and APBB1 is mediated by TSHZ3. Interacts (via homeobox domain) with APBB1 (via PID domain 1). Expressed in cortical neurons.

Its subcellular location is the nucleus. It is found in the cell projection. The protein localises to the growth cone. In terms of biological role, transcriptional regulator involved in developmental processes. Functions in association with APBB1, SET and HDAC factors as a transcriptional repressor, that inhibits the expression of CASP4. TSHZ3-mediated transcription repression involves the recruitment of histone deacetylases HDAC1 and HDAC2. Associates with chromatin in a region surrounding the CASP4 transcriptional start site(s). Regulates the development of neurons involved in both respiratory rhythm and airflow control. Promotes maintenance of nucleus ambiguus (nA) motoneurons, which govern upper airway function, and establishes a respiratory rhythm generator (RRG) activity compatible with survival at birth. Involved in the differentiation of the proximal uretic smooth muscle cells during developmental processes. Involved in the up-regulation of myocardin, that directs the expression of smooth muscle cells in the proximal ureter. Involved in the modulation of glutamatergic synaptic transmission and long-term synaptic potentiation. The sequence is that of Teashirt homolog 3 (Tshz3) from Rattus norvegicus (Rat).